The following is a 47-amino-acid chain: PhoP/PhoQ regulator MgrB (47 aa).

Residues 6–26 form a helical membrane-spanning segment; sequence WVALVVVVLACLLLWAQVFNM.

This sequence belongs to the MgrB family. May form homooligomers. Probably interacts with the periplasmic domain of PhoQ.

The protein resides in the cell inner membrane. In terms of biological role, phoP-regulated transcription is redox-sensitive, being activated when the periplasm becomes more reducing. MgrB acts between DsbA/DsbB and PhoP/PhoQ in this pathway. Represses PhoP/PhoQ signaling, possibly by binding to the periplasmic domain of PhoQ, altering its activity and that of downstream effector PhoP. This chain is PhoP/PhoQ regulator MgrB, found in Escherichia coli O1:K1 / APEC.